The chain runs to 635 residues: 1-deoxy-D-xylulose-5-phosphate synthase (635 aa).

Residues His-72 and 113 to 115 contribute to the thiamine diphosphate site; that span reads GHA. Asp-144 serves as a coordination point for Mg(2+). Thiamine diphosphate-binding positions include 145–146, Asn-174, Tyr-287, and Glu-370; that span reads GA. Asn-174 provides a ligand contact to Mg(2+).

It belongs to the transketolase family. DXPS subfamily. In terms of assembly, homodimer. Mg(2+) serves as cofactor. It depends on thiamine diphosphate as a cofactor.

It carries out the reaction D-glyceraldehyde 3-phosphate + pyruvate + H(+) = 1-deoxy-D-xylulose 5-phosphate + CO2. It participates in metabolic intermediate biosynthesis; 1-deoxy-D-xylulose 5-phosphate biosynthesis; 1-deoxy-D-xylulose 5-phosphate from D-glyceraldehyde 3-phosphate and pyruvate: step 1/1. Catalyzes the acyloin condensation reaction between C atoms 2 and 3 of pyruvate and glyceraldehyde 3-phosphate to yield 1-deoxy-D-xylulose-5-phosphate (DXP). In Trichormus variabilis (strain ATCC 29413 / PCC 7937) (Anabaena variabilis), this protein is 1-deoxy-D-xylulose-5-phosphate synthase.